The chain runs to 114 residues: Large ribosomal subunit protein bL17 (114 aa).

This sequence belongs to the bacterial ribosomal protein bL17 family. Part of the 50S ribosomal subunit. Contacts protein L32.

This is Large ribosomal subunit protein bL17 from Clostridium acetobutylicum (strain ATCC 824 / DSM 792 / JCM 1419 / IAM 19013 / LMG 5710 / NBRC 13948 / NRRL B-527 / VKM B-1787 / 2291 / W).